Reading from the N-terminus, the 121-residue chain is U15-barytoxin-Tl1a (121 aa).

The N-terminal stretch at Met1–Ala17 is a signal peptide. Intrachain disulfides connect Cys56–Cys74, Cys67–Cys80, Cys71–Cys119, and Cys73–Cys90.

The protein belongs to the neurotoxin 03 (Tx2) family. 03 subfamily. In terms of tissue distribution, expressed by the venom gland.

It is found in the secreted. Ion channel inhibitor. This Trittame loki (Brush-footed trapdoor spider) protein is U15-barytoxin-Tl1a.